The sequence spans 115 residues: Evasin P1183 (115 aa).

The first 25 residues, 1–25, serve as a signal peptide directing secretion; the sequence is MTRNWSFRVIFVSAMWCALLKFATL. 4 disulfides stabilise this stretch: cysteine 38-cysteine 58, cysteine 54-cysteine 94, cysteine 70-cysteine 99, and cysteine 89-cysteine 108. 3 N-linked (GlcNAc...) asparagine glycosylation sites follow: asparagine 45, asparagine 72, and asparagine 103.

The protein resides in the secreted. Its function is as follows. Salivary chemokine-binding protein which binds to host chemokine CCL2. The polypeptide is Evasin P1183 (Amblyomma triste (Neotropical tick)).